The primary structure comprises 265 residues: Hydroxyethylthiazole kinase (265 aa).

Methionine 44 contacts substrate. ATP is bound by residues lysine 120 and serine 166. Position 193 (glycine 193) interacts with substrate.

It belongs to the Thz kinase family. It depends on Mg(2+) as a cofactor.

It carries out the reaction 5-(2-hydroxyethyl)-4-methylthiazole + ATP = 4-methyl-5-(2-phosphooxyethyl)-thiazole + ADP + H(+). It functions in the pathway cofactor biosynthesis; thiamine diphosphate biosynthesis; 4-methyl-5-(2-phosphoethyl)-thiazole from 5-(2-hydroxyethyl)-4-methylthiazole: step 1/1. Functionally, catalyzes the phosphorylation of the hydroxyl group of 4-methyl-5-beta-hydroxyethylthiazole (THZ). The protein is Hydroxyethylthiazole kinase of Methanosphaerula palustris (strain ATCC BAA-1556 / DSM 19958 / E1-9c).